Here is a 69-residue protein sequence, read N- to C-terminus: UPF0291 protein CD630_10710 (69 aa).

This sequence belongs to the UPF0291 family.

The protein resides in the cytoplasm. The chain is UPF0291 protein CD630_10710 from Clostridioides difficile (strain 630) (Peptoclostridium difficile).